Consider the following 207-residue polypeptide: Large ribosomal subunit protein uL4 (207 aa).

Positions 53–76 (NRSAVRGGGRKPWRQKGTGRARQG) are disordered. Residues 60–71 (GGRKPWRQKGTG) show a composition bias toward basic residues.

It belongs to the universal ribosomal protein uL4 family. As to quaternary structure, part of the 50S ribosomal subunit.

Functionally, one of the primary rRNA binding proteins, this protein initially binds near the 5'-end of the 23S rRNA. It is important during the early stages of 50S assembly. It makes multiple contacts with different domains of the 23S rRNA in the assembled 50S subunit and ribosome. In terms of biological role, forms part of the polypeptide exit tunnel. The chain is Large ribosomal subunit protein uL4 from Staphylococcus saprophyticus subsp. saprophyticus (strain ATCC 15305 / DSM 20229 / NCIMB 8711 / NCTC 7292 / S-41).